Reading from the N-terminus, the 207-residue chain is Outer-membrane lipoprotein carrier protein (207 aa).

Residues 1 to 21 (MRAIRMLLVSALAMGAVSAHA) form the signal peptide.

This sequence belongs to the LolA family. In terms of assembly, monomer.

The protein resides in the periplasm. Functionally, participates in the translocation of lipoproteins from the inner membrane to the outer membrane. Only forms a complex with a lipoprotein if the residue after the N-terminal Cys is not an aspartate (The Asp acts as a targeting signal to indicate that the lipoprotein should stay in the inner membrane). This Pseudomonas entomophila (strain L48) protein is Outer-membrane lipoprotein carrier protein.